The chain runs to 536 residues: Zinc finger protein 394 (536 aa).

Positions 18–45 (AVKVEEDSPGSQEPSGSGDWQNPETSRK) are disordered. Lys-20 is covalently cross-linked (Glycyl lysine isopeptide (Lys-Gly) (interchain with G-Cter in SUMO2)). The segment covering 26 to 41 (PGSQEPSGSGDWQNPE) has biased composition (polar residues). The 83-residue stretch at 44–126 (RKQFRQLRYQ…ALARTLQRAL (83 aa)) folds into the SCAN box domain. Residues 135-196 (ATFKDVAESL…KQEMSKEAES (62 aa)) form the KRAB domain. Glycyl lysine isopeptide (Lys-Gly) (interchain with G-Cter in SUMO2) cross-links involve residues Lys-207 and Lys-260. 3 consecutive C2H2-type zinc fingers follow at residues 328–350 (YKCD…QRTH), 356–378 (YQCQ…QRTH), and 384–406 (YACP…QRTH). Residues 412 to 433 (CKCEECGEIFHISSLFKHQRLH) form a C2H2-type 4; atypical zinc finger. Lys-413 participates in a covalent cross-link: Glycyl lysine isopeptide (Lys-Gly) (interchain with G-Cter in SUMO2). C2H2-type zinc fingers lie at residues 439-461 (HKCE…QRIH), 467-489 (YMCF…QRTH), and 495-517 (YKCF…QRIH).

This sequence belongs to the krueppel C2H2-type zinc-finger protein family.

It is found in the nucleus. Functionally, may be involved in transcriptional regulation. This Rattus norvegicus (Rat) protein is Zinc finger protein 394 (Znf394).